The following is a 217-amino-acid chain: tRNA (guanine-N(7)-)-methyltransferase (217 aa).

Residues glutamate 44, glutamate 69, aspartate 96, and aspartate 118 each coordinate S-adenosyl-L-methionine. Aspartate 118 is a catalytic residue. Residues lysine 122, aspartate 154, and 191–194 (TEYE) each bind substrate.

Belongs to the class I-like SAM-binding methyltransferase superfamily. TrmB family.

The catalysed reaction is guanosine(46) in tRNA + S-adenosyl-L-methionine = N(7)-methylguanosine(46) in tRNA + S-adenosyl-L-homocysteine. It functions in the pathway tRNA modification; N(7)-methylguanine-tRNA biosynthesis. In terms of biological role, catalyzes the formation of N(7)-methylguanine at position 46 (m7G46) in tRNA. The sequence is that of tRNA (guanine-N(7)-)-methyltransferase from Bacillus cereus (strain G9842).